Here is a 208-residue protein sequence, read N- to C-terminus: Fibroblast growth factor 10 (208 aa).

A signal peptide spans 1-37; the sequence is MWKWILTHCASAFPHLPGCCCCCFLLLFLVSSVPVTC. Asparagine 51 and asparagine 196 each carry an N-linked (GlcNAc...) asparagine glycan.

This sequence belongs to the heparin-binding growth factors family. In terms of assembly, interacts with FGFR1 and FGFR2. Interacts with FGFBP1.

It is found in the secreted. Functionally, plays an important role in the regulation of embryonic development, cell proliferation and cell differentiation. Required for normal branching morphogenesis. May play a role in wound healing. The chain is Fibroblast growth factor 10 (FGF10) from Homo sapiens (Human).